A 138-amino-acid chain; its full sequence is MLIPRKVKHRKQHHPRQRGIASGGTTVNFGDYGIQALEHAYVTNRQIESARIAINRHIKRGGKVWINIFPDRPLTKKPAETRMGSGKGSPEWWVANVKPGRVLFELSYPNEGVARAALTRAIHKLPIKARIITREEQF.

Residues 1–17 (MLIPRKVKHRKQHHPRQ) show a composition bias toward basic residues. Residues 1–22 (MLIPRKVKHRKQHHPRQRGIAS) are disordered.

The protein belongs to the universal ribosomal protein uL16 family. Part of the 50S ribosomal subunit.

Functionally, binds 23S rRNA and is also seen to make contacts with the A and possibly P site tRNAs. This chain is Large ribosomal subunit protein uL16, found in Mycobacterium tuberculosis (strain ATCC 25177 / H37Ra).